A 304-amino-acid chain; its full sequence is tRNA-uridine aminocarboxypropyltransferase 1 (304 aa).

Ser-2 is modified (N-acetylserine). Positions 206 to 209 (DSTW) match the DXTW motif.

Belongs to the TDD superfamily. DTWD1 family.

It localises to the nucleus. It catalyses the reaction a uridine in tRNA + S-adenosyl-L-methionine = a 3-[(3S)-3-amino-3-carboxypropyl]uridine in tRNA + S-methyl-5'-thioadenosine + H(+). In terms of biological role, catalyzes the formation of 3-(3-amino-3-carboxypropyl)uridine (acp3U) at position 20 in the D-loop of several cytoplasmic tRNAs (acp3U(20)). The polypeptide is tRNA-uridine aminocarboxypropyltransferase 1 (Pongo abelii (Sumatran orangutan)).